The sequence spans 311 residues: MEVKIFNTQDVQDFLRVASGLEQEGGNPRVKQIIHRVLSDLYKAIEDLNITSDEYWAGVAYLNQLGANQEAGLLSPGLGFDHYLDMRMDAEDAALGIENATPRTIEGPLYVAGAPESVGYARMDDGSDPNGHTLILHGTIFDADGKPLPNAKVEIWHANTKGFYSHFDPTGEQQAFNMRRSIITDENGQYRVRTILPAGYGCPPEGPTQQLLNQLGRHGNRPAHIHYFVSADGHRKLTTQINVAGDPYTYDDFAYATREGLVVDAVEHTDPEAIKANDVEGPFAEMVFDLKLTRLVDGVDNQVVDRPRLAV.

Tyrosine 164 is a binding site for catechol. Fe cation-binding residues include tyrosine 164, tyrosine 200, histidine 224, and histidine 226. 224–226 (HIH) contributes to the catechol binding site.

The protein belongs to the intradiol ring-cleavage dioxygenase family. Homodimer. Requires Fe(3+) as cofactor.

It carries out the reaction catechol + O2 = cis,cis-muconate + 2 H(+). Its pathway is aromatic compound metabolism; beta-ketoadipate pathway; 5-oxo-4,5-dihydro-2-furylacetate from catechol: step 1/3. This is Catechol 1,2-dioxygenase from Acinetobacter baylyi (strain ATCC 33305 / BD413 / ADP1).